The primary structure comprises 437 residues: Chromosomal replication initiator protein DnaA (437 aa).

Residues 1–72 (MEQFNAFKSL…ESLYEGIKSV (72 aa)) are domain I, interacts with DnaA modulators. A domain II region spans residues 72–99 (VNFVNEQDFFFNLAKLEENSRDTLYQNS). The domain III, AAA+ region stretch occupies residues 100-320 (GLSKNYTFQN…GIATKLLFFA (221 aa)). The ATP site is built by glycine 144, glycine 146, lysine 147, and threonine 148. The tract at residues 321 to 437 (KTSKQNLINT…LRDVITSLVI (117 aa)) is domain IV, binds dsDNA.

The protein belongs to the DnaA family. As to quaternary structure, oligomerizes as a right-handed, spiral filament on DNA at oriC.

The protein resides in the cytoplasm. Functionally, plays an essential role in the initiation and regulation of chromosomal replication. ATP-DnaA binds to the origin of replication (oriC) to initiate formation of the DNA replication initiation complex once per cell cycle. Binds the DnaA box (a 9 base pair repeat at the origin) and separates the double-stranded (ds)DNA. Forms a right-handed helical filament on oriC DNA; dsDNA binds to the exterior of the filament while single-stranded (ss)DNA is stabiized in the filament's interior. The ATP-DnaA-oriC complex binds and stabilizes one strand of the AT-rich DNA unwinding element (DUE), permitting loading of DNA polymerase. After initiation quickly degrades to an ADP-DnaA complex that is not apt for DNA replication. Binds acidic phospholipids. The protein is Chromosomal replication initiator protein DnaA of Mycoplasma genitalium (strain ATCC 33530 / DSM 19775 / NCTC 10195 / G37) (Mycoplasmoides genitalium).